The sequence spans 39 residues: Photosystem II reaction center protein L (39 aa).

The chain crosses the membrane as a helical span at residues 16 to 37 (RTSLYLGLLLVAVLGILFSSYF).

It belongs to the PsbL family. As to quaternary structure, PSII is composed of 1 copy each of membrane proteins PsbA, PsbB, PsbC, PsbD, PsbE, PsbF, PsbH, PsbI, PsbJ, PsbK, PsbL, PsbM, PsbT, PsbX, PsbY, PsbZ, Psb30/Ycf12, peripheral proteins PsbO, CyanoQ (PsbQ), PsbU, PsbV and a large number of cofactors. It forms dimeric complexes.

The protein localises to the cellular thylakoid membrane. Functionally, one of the components of the core complex of photosystem II (PSII). PSII is a light-driven water:plastoquinone oxidoreductase that uses light energy to abstract electrons from H(2)O, generating O(2) and a proton gradient subsequently used for ATP formation. It consists of a core antenna complex that captures photons, and an electron transfer chain that converts photonic excitation into a charge separation. This subunit is found at the monomer-monomer interface and is required for correct PSII assembly and/or dimerization. Required for PSII activity, at least in part due to its effects on PSII assembly. May make specific contact(s) with lipids. The chain is Photosystem II reaction center protein L from Synechocystis sp. (strain ATCC 27184 / PCC 6803 / Kazusa).